We begin with the raw amino-acid sequence, 173 residues long: Probable capsid assembly scaffolding protein (173 aa).

Residues 1–30 (MSDTATTEGTPAGDPTPVVTDKPLEPTPKT) form a disordered region. A coiled-coil region spans residues 36-56 (VKELRQEAAAARVAKKDAVEA).

It belongs to the L5likevirus scaffolding protein family.

Functionally, scaffolding protein involved in the icosahedric procapsid assembly. Coassembles with the capsid proteins to form the procapsid, in which the scaffolding protein is found within the external shell of icosahedrally arranged capsid protein subunits. This is Probable capsid assembly scaffolding protein (16) from Mycobacterium (Mycobacteriophage D29).